The following is a 591-amino-acid chain: Aspartate--tRNA ligase (591 aa).

Glu-171 is an L-aspartate binding site. The tract at residues Gln-195–Lys-198 is aspartate. Arg-217 provides a ligand contact to L-aspartate. ATP contacts are provided by residues Arg-217 to Glu-219 and Gln-226. His-448 contacts L-aspartate. Residue Glu-482 coordinates ATP. Position 489 (Arg-489) interacts with L-aspartate. Gly-534 to Arg-537 is a binding site for ATP.

Belongs to the class-II aminoacyl-tRNA synthetase family. Type 1 subfamily. As to quaternary structure, homodimer.

The protein localises to the cytoplasm. The enzyme catalyses tRNA(Asp) + L-aspartate + ATP = L-aspartyl-tRNA(Asp) + AMP + diphosphate. Its function is as follows. Catalyzes the attachment of L-aspartate to tRNA(Asp) in a two-step reaction: L-aspartate is first activated by ATP to form Asp-AMP and then transferred to the acceptor end of tRNA(Asp). This is Aspartate--tRNA ligase from Aliivibrio salmonicida (strain LFI1238) (Vibrio salmonicida (strain LFI1238)).